A 515-amino-acid chain; its full sequence is Bifunctional purine biosynthesis protein PurH (515 aa).

The region spanning 1-145 (MTKRALISVS…KNHASVTVVV (145 aa)) is the MGS-like domain.

It belongs to the PurH family.

It carries out the reaction (6R)-10-formyltetrahydrofolate + 5-amino-1-(5-phospho-beta-D-ribosyl)imidazole-4-carboxamide = 5-formamido-1-(5-phospho-D-ribosyl)imidazole-4-carboxamide + (6S)-5,6,7,8-tetrahydrofolate. The enzyme catalyses IMP + H2O = 5-formamido-1-(5-phospho-D-ribosyl)imidazole-4-carboxamide. It participates in purine metabolism; IMP biosynthesis via de novo pathway; 5-formamido-1-(5-phospho-D-ribosyl)imidazole-4-carboxamide from 5-amino-1-(5-phospho-D-ribosyl)imidazole-4-carboxamide (10-formyl THF route): step 1/1. It functions in the pathway purine metabolism; IMP biosynthesis via de novo pathway; IMP from 5-formamido-1-(5-phospho-D-ribosyl)imidazole-4-carboxamide: step 1/1. This is Bifunctional purine biosynthesis protein PurH from Streptococcus pyogenes serotype M2 (strain MGAS10270).